The sequence spans 69 residues: DNA gyrase inhibitor YacG (69 aa).

Residues C14, C17, C33, and C37 each contribute to the Zn(2+) site.

The protein belongs to the DNA gyrase inhibitor YacG family. As to quaternary structure, interacts with GyrB. Zn(2+) is required as a cofactor.

In terms of biological role, inhibits all the catalytic activities of DNA gyrase by preventing its interaction with DNA. Acts by binding directly to the C-terminal domain of GyrB, which probably disrupts DNA binding by the gyrase. This chain is DNA gyrase inhibitor YacG, found in Aliivibrio salmonicida (strain LFI1238) (Vibrio salmonicida (strain LFI1238)).